The primary structure comprises 82 residues: Opistoporin-1 (82 aa).

The N-terminal stretch at M1 to G22 is a signal peptide. The propeptide occupies E67 to E82.

Expressed by the venom gland.

The protein resides in the secreted. It is found in the target cell membrane. Its function is as follows. At high concentrations, acts as a pore former in cellular membranes and causes the leakage of the cells. At submicromolar concentrations, degranulates granulocytes and has a weak hemolytic activity against human erythrocytes. Also strongly inhibits the production of superoxide anions. Has a strong antibacterial activity against Gram-negative bacteria but is less active against Gram-positive bacteria. Also has antifungal activity. In Opistophthalmus carinatus (African yellow leg scorpion), this protein is Opistoporin-1.